A 271-amino-acid chain; its full sequence is Murein DD-endopeptidase MepH (271 aa).

Positions 1 to 27 (MARINRISITLCALLFTTLPLTPMAHA) are cleaved as a signal peptide. The tract at residues 27–102 (ASKQARESSA…KHAVNKTASA (76 aa)) is disordered. Residues 55–64 (KTQKTAKKAA) show a composition bias toward basic residues. Residues 65–86 (SKSTTKSKTASSVKKSSITASK) show a composition bias toward low complexity. In terms of domain architecture, NlpC/P60 spans 138–265 (QKATKVAMNK…RHYVGARRVM (128 aa)). Cysteine 169 acts as the Nucleophile in catalysis. The active-site Proton acceptor is the histidine 224. Glutamine 236 is a catalytic residue.

Belongs to the peptidase C40 family.

It functions in the pathway cell wall biogenesis; cell wall polysaccharide biosynthesis. Functionally, a murein DD-endopeptidase with specificity for D-Ala-meso-diaminopimelic acid (mDAP) cross-links. Its role is probably to cleave D-Ala-mDAP cross-links to allow insertion of new glycans and thus cell wall expansion. Functionally redundant with MepM and MepH. Partially suppresses an mepS disruption mutant. This Escherichia coli (strain K12) protein is Murein DD-endopeptidase MepH (mepH).